The chain runs to 352 residues: tRNA-specific 2-thiouridylase MnmA (352 aa).

ATP-binding positions include 9–16 and M35; that span reads ALSGGVDS. The Nucleophile role is filled by C96. A disulfide bridge links C96 with C192. G120 contacts ATP. Residues 142–144 are interaction with tRNA; it reads KDQ. C192 acts as the Cysteine persulfide intermediate in catalysis. An interaction with tRNA region spans residues 299 to 300; the sequence is RY.

The protein belongs to the MnmA/TRMU family.

It is found in the cytoplasm. It catalyses the reaction S-sulfanyl-L-cysteinyl-[protein] + uridine(34) in tRNA + AH2 + ATP = 2-thiouridine(34) in tRNA + L-cysteinyl-[protein] + A + AMP + diphosphate + H(+). Functionally, catalyzes the 2-thiolation of uridine at the wobble position (U34) of tRNA, leading to the formation of s(2)U34. This is tRNA-specific 2-thiouridylase MnmA from Acidithiobacillus ferrooxidans (strain ATCC 23270 / DSM 14882 / CIP 104768 / NCIMB 8455) (Ferrobacillus ferrooxidans (strain ATCC 23270)).